A 458-amino-acid polypeptide reads, in one-letter code: Probable M18 family aminopeptidase 1 (458 aa).

The Zn(2+) site is built by His-95, His-170, and His-434.

It belongs to the peptidase M18 family. It depends on Zn(2+) as a cofactor.

This chain is Probable M18 family aminopeptidase 1, found in Borreliella afzelii (strain PKo) (Borrelia afzelii).